The primary structure comprises 630 residues: Biosynthetic arginine decarboxylase (630 aa).

Lys99 carries the N6-(pyridoxal phosphate)lysine modification. 281-291 is a binding site for substrate; that stretch reads VDIGGGLGVDY.

Belongs to the Orn/Lys/Arg decarboxylase class-II family. SpeA subfamily. Mg(2+) is required as a cofactor. Requires pyridoxal 5'-phosphate as cofactor.

It catalyses the reaction L-arginine + H(+) = agmatine + CO2. Its function is as follows. Catalyzes the biosynthesis of agmatine from arginine. This Bacteroides thetaiotaomicron (strain ATCC 29148 / DSM 2079 / JCM 5827 / CCUG 10774 / NCTC 10582 / VPI-5482 / E50) protein is Biosynthetic arginine decarboxylase.